The chain runs to 480 residues: Protein nucleotidyltransferase YdiU (480 aa).

Residues glycine 86, glycine 88, arginine 89, lysine 109, aspartate 121, glycine 122, arginine 172, and arginine 179 each coordinate ATP. The active-site Proton acceptor is aspartate 248. The Mg(2+) site is built by asparagine 249 and aspartate 258. Aspartate 258 serves as a coordination point for ATP.

This sequence belongs to the SELO family. Mg(2+) is required as a cofactor. It depends on Mn(2+) as a cofactor.

It catalyses the reaction L-seryl-[protein] + ATP = 3-O-(5'-adenylyl)-L-seryl-[protein] + diphosphate. The catalysed reaction is L-threonyl-[protein] + ATP = 3-O-(5'-adenylyl)-L-threonyl-[protein] + diphosphate. The enzyme catalyses L-tyrosyl-[protein] + ATP = O-(5'-adenylyl)-L-tyrosyl-[protein] + diphosphate. It carries out the reaction L-histidyl-[protein] + UTP = N(tele)-(5'-uridylyl)-L-histidyl-[protein] + diphosphate. It catalyses the reaction L-seryl-[protein] + UTP = O-(5'-uridylyl)-L-seryl-[protein] + diphosphate. The catalysed reaction is L-tyrosyl-[protein] + UTP = O-(5'-uridylyl)-L-tyrosyl-[protein] + diphosphate. Nucleotidyltransferase involved in the post-translational modification of proteins. It can catalyze the addition of adenosine monophosphate (AMP) or uridine monophosphate (UMP) to a protein, resulting in modifications known as AMPylation and UMPylation. This chain is Protein nucleotidyltransferase YdiU, found in Salmonella agona (strain SL483).